The primary structure comprises 456 residues: Divalent metal cation transporter MntH (456 aa).

11 helical membrane passes run Ala47–Trp67, Phe77–Ala97, Ala123–Ile143, Leu151–Val171, Ala184–Ala204, Met227–His247, Ile276–Phe296, Pro316–Leu336, Phe369–Glu389, Ile392–Phe412, and Leu422–Leu442.

Belongs to the NRAMP family.

It localises to the cell inner membrane. Its function is as follows. H(+)-stimulated, divalent metal cation uptake system. This Brucella suis biovar 1 (strain 1330) protein is Divalent metal cation transporter MntH.